We begin with the raw amino-acid sequence, 940 residues long: Isoleucine--tRNA ligase (940 aa).

Residues 58–68 (PYANGSIHIGH) carry the 'HIGH' region motif. Glu-564 is a binding site for L-isoleucyl-5'-AMP. The 'KMSKS' region signature appears at 605-609 (KMSKS). Lys-608 contributes to the ATP binding site. Positions 903, 906, 923, and 926 each coordinate Zn(2+).

The protein belongs to the class-I aminoacyl-tRNA synthetase family. IleS type 1 subfamily. In terms of assembly, monomer. Zn(2+) serves as cofactor.

The protein resides in the cytoplasm. The catalysed reaction is tRNA(Ile) + L-isoleucine + ATP = L-isoleucyl-tRNA(Ile) + AMP + diphosphate. In terms of biological role, catalyzes the attachment of isoleucine to tRNA(Ile). As IleRS can inadvertently accommodate and process structurally similar amino acids such as valine, to avoid such errors it has two additional distinct tRNA(Ile)-dependent editing activities. One activity is designated as 'pretransfer' editing and involves the hydrolysis of activated Val-AMP. The other activity is designated 'posttransfer' editing and involves deacylation of mischarged Val-tRNA(Ile). The protein is Isoleucine--tRNA ligase of Shewanella baltica (strain OS195).